The chain runs to 341 residues: MHSTKVTYPEPMQLSGILDQYESFQVTPCIGTEFPKANLAEWLHSPNADALLRDLAITIAQRGVVFFRAQTDLDGELQKELTHRLGVQSGKPAGHRLSKHPLHLIRKDDPEMGVLDPGRQQKLHGVENTQKRQRAVLEYHSDGSYEVCPPDFTMLRMTEIPPTGGDTLWASGYELYDRLSTPYQKFFESLTAQHEVPSLRKLAETEPGIYDGPRGAPANTDMQFKQSHPMVRTHPVTGWKTLFAGGLHCRRVNDVTDFESEQLLSKIISLVGDNHDLQVRFRWNNPGDVAIWDNRCVLHCPTQDHYGLGGRMGYRTMGIAEKPYLDPNSPSRQEALAAAAK.

Residue H100 coordinates substrate. H140 and D142 together coordinate Fe cation. Residue T167 coordinates 2-oxoglutarate. Residue H299 coordinates Fe cation. The 2-oxoglutarate site is built by R311 and R315. Residue R315 coordinates substrate.

It belongs to the TfdA dioxygenase family. Fe(2+) serves as cofactor.

Its pathway is secondary metabolite biosynthesis. Its function is as follows. Alpha-ketoglutarate-dependent dioxygenase; part of the gene cluster that mediates the biosynthesis of oryzines, natural products with an unusual maleidride backbone. The two subunits of the fungal fatty acid synthase oryfasA and oryfasB probably form octenoic acid. This fatty acid is most likely activated by the acyl-CoA ligase oryP to give octenyl-CoA before the citrate synthase-like protein oryE catalyzes condensation with oxaloacetate to form tricarboxylic acid. The next steps of the pathways are conjectural, but a favorite possible route has been proposed, beginning with decarboxylation and concomitant dehydration by the decarboxylase oryM, followed by tautomerization, which may lead to the production of a diene intermediate. Reduction of this diene intermediate could give the known metabolite piliformic acid. On the pathway to oryzine B and oryzine A, however, hydroxylation of the diene by the alpha-ketoglutarate-dependent dioxygenase oryG and lactonisation by the lactonohydrolases oryH or oryL could give oryzine B directly. Finally, enoyl reduction by the dehydrogenase oryD would then convert oryzine B into oryzine A. The sequence is that of Alpha-ketoglutarate-dependent dioxygenase oryG from Aspergillus oryzae (strain ATCC 42149 / RIB 40) (Yellow koji mold).